The sequence spans 239 residues: MVIKAQSPAGFAEEYIIESIWNNCFPPGTILPAERELSELIGVTRTTLREVLQRLARDGWLTIQHGKPTKVNNFWETSGLNILETLARLDHESVPQLIDNLLSVRTNISTIFIRTALRQHPDKAQEVLATAHEVADHADAFADLDYNIFRGLAFASGNPIYGLILNGMKGLYTRIGRHYFANPEARSLALGFYHKLSSLCEQGAHDQVYETVRRYGHDSGEIWHRMQKNLPGDLAIQGR.

Residues 6 to 74 form the HTH gntR-type domain; it reads QSPAGFAEEY…HGKPTKVNNF (69 aa). Residues 34-53 constitute a DNA-binding region (H-T-H motif); that stretch reads ERELSELIGVTRTTLREVLQ.

As to quaternary structure, homodimer.

It localises to the cytoplasm. Its function is as follows. Multifunctional regulator of fatty acid metabolism. Represses transcription of at least eight genes required for fatty acid transport and beta-oxidation including fadA, fadB, fadD, fadL and fadE. Activates transcription of at least three genes required for unsaturated fatty acid biosynthesis: fabA, fabB and iclR, the gene encoding the transcriptional regulator of the aceBAK operon encoding the glyoxylate shunt enzymes. Binding of FadR is specifically inhibited by long chain fatty acyl-CoA compounds. This Salmonella typhi protein is Fatty acid metabolism regulator protein.